A 480-amino-acid polypeptide reads, in one-letter code: Pyruvate kinase (480 aa).

Arg-36 contributes to the substrate binding site. K(+) is bound by residues Asn-38, Ser-40, and Asp-70. 38 to 41 (NFSH) is an ATP binding site. Residues Arg-77 and Lys-160 each coordinate ATP. Glu-225 is a binding site for Mg(2+). Positions 251, 252, and 284 each coordinate substrate. Residue Asp-252 coordinates Mg(2+).

Belongs to the pyruvate kinase family. As to quaternary structure, homotetramer. Mg(2+) serves as cofactor. K(+) is required as a cofactor.

It catalyses the reaction pyruvate + ATP = phosphoenolpyruvate + ADP + H(+). It functions in the pathway carbohydrate degradation; glycolysis; pyruvate from D-glyceraldehyde 3-phosphate: step 5/5. With respect to regulation, allosterically activated by AMP and by several sugar phosphates. Belongs to type II PK. This is Pyruvate kinase (pykA) from Buchnera aphidicola subsp. Acyrthosiphon pisum (strain APS) (Acyrthosiphon pisum symbiotic bacterium).